Reading from the N-terminus, the 120-residue chain is NAD(P)H-quinone oxidoreductase subunit 3, chloroplastic (120 aa).

3 consecutive transmembrane segments (helical) span residues 9 to 29, 64 to 84, and 88 to 108; these read IFWTFLIIASLIPILAFSISG, MFALVFVVFDVETVFLYPWAM, and VLGVSVFIEALIFVLILVVGL.

The protein belongs to the complex I subunit 3 family. As to quaternary structure, NDH is composed of at least 16 different subunits, 5 of which are encoded in the nucleus.

It is found in the plastid. The protein localises to the chloroplast thylakoid membrane. It carries out the reaction a plastoquinone + NADH + (n+1) H(+)(in) = a plastoquinol + NAD(+) + n H(+)(out). The enzyme catalyses a plastoquinone + NADPH + (n+1) H(+)(in) = a plastoquinol + NADP(+) + n H(+)(out). In terms of biological role, NDH shuttles electrons from NAD(P)H:plastoquinone, via FMN and iron-sulfur (Fe-S) centers, to quinones in the photosynthetic chain and possibly in a chloroplast respiratory chain. The immediate electron acceptor for the enzyme in this species is believed to be plastoquinone. Couples the redox reaction to proton translocation, and thus conserves the redox energy in a proton gradient. The polypeptide is NAD(P)H-quinone oxidoreductase subunit 3, chloroplastic (Hordeum vulgare (Barley)).